The following is a 77-amino-acid chain: Teretoxin Tsu15.4 (77 aa).

The N-terminal stretch at 1–21 (MTKLTVLLLAILVLLPLATSN) is a signal peptide. Residues 22–40 (SAADEALASLSGLLRRAKR) constitute a propeptide that is removed on maturation.

Contains 4 disulfide bonds. As to expression, expressed by the venom duct.

The protein resides in the secreted. The polypeptide is Teretoxin Tsu15.4 (Terebra subulata (Chocolate spotted auger)).